Here is a 162-residue protein sequence, read N- to C-terminus: Caveolin-2 (162 aa).

Residues 1–86 (MGLETEKADV…FEISKYVMYK (86 aa)) are Cytoplasmic-facing. Y19 carries the post-translational modification Phosphotyrosine; by SRC. S20 and S23 each carry phosphoserine. The residue at position 27 (Y27) is a Phosphotyrosine; by SRC. The residue at position 36 (S36) is a Phosphoserine. The helical intramembrane region spans 87–107 (FLTVFLSIPLAFLAGILFATL). The Cytoplasmic portion of the chain corresponds to 108 to 162 (SCLHIWIIMPFVKTCLMVLPSVQTIWKSVTDAIIAPLCTSIGRSFSSVSLQLSHD).

Belongs to the caveolin family. Monomer or homodimer. Interacts with CAV1; the interaction forms a stable heterooligomeric complex that is required for targeting to lipid rafts and for caveolae formation. Tyrosine phosphorylated forms do not form heterooligomers with the Tyr-19-phosphorylated form existing as a monomer or dimer, and the Tyr-27-form as a monomer only. Interacts (tyrosine phosphorylated form) with the SH2 domain-containing proteins, RASA1, NCK1 and SRC. Interacts (tyrosine phosphorylated form) with INSR, the interaction (Tyr-27-phosphorylated form) is increased on insulin stimulation. Interacts (Tyr-19 phosphorylated form) with MAPK1 (phosphorylated form); the interaction, promoted by insulin, leads to nuclear location and MAPK1 activation. Interacts with STAT3; the interaction is increased on insulin-induced tyrosine phosphorylation leading to STAT activation. Phosphorylated on serine and tyrosine residues. CAV1 promotes phosphorylation on Ser-23 which then targets the complex to the plasma membrane, lipid rafts and caveolae. Phosphorylation on Ser-36 appears to modulate mitosis in endothelial cells. Phosphorylation on both Tyr-19 and Tyr-27 is required for insulin-induced 'Ser-727' phosphorylation of STAT3 and its activation. Phosphorylation on Tyr-19 is required for insulin-induced phosphorylation of MAPK1 and DNA binding of STAT3. Tyrosine phosphorylation is induced by both EGF and insulin (By. similarity).

Its subcellular location is the nucleus. The protein localises to the cytoplasm. It localises to the golgi apparatus membrane. It is found in the cell membrane. The protein resides in the membrane. Its subcellular location is the caveola. May act as a scaffolding protein within caveolar membranes. Interacts directly with G-protein alpha subunits and can functionally regulate their activity. Acts as an accessory protein in conjunction with CAV1 in targeting to lipid rafts and driving caveolae formation. The Ser-36 phosphorylated form has a role in modulating mitosis in endothelial cells. Positive regulator of cellular mitogenesis of the MAPK signaling pathway. Required for the insulin-stimulated nuclear translocation and activation of MAPK1 and STAT3, and the subsequent regulation of cell cycle progression. The protein is Caveolin-2 (CAV2) of Saimiri boliviensis boliviensis (Bolivian squirrel monkey).